The sequence spans 146 residues: Large ribosomal subunit protein uL15 (146 aa).

The disordered stretch occupies residues 18-45 (VLGRGLGCGKGKTSGRGHKGQKARSGCA). Positions 30-39 (TSGRGHKGQK) are enriched in basic residues.

Belongs to the universal ribosomal protein uL15 family. As to quaternary structure, part of the 50S ribosomal subunit.

Functionally, binds to the 23S rRNA. This chain is Large ribosomal subunit protein uL15, found in Anaplasma marginale (strain St. Maries).